Here is a 281-residue protein sequence, read N- to C-terminus: Protein ZAR1-like 1.L (281 aa).

The 3CxxC-type zinc-finger motif lies at 183–267 (QKYGFFHCKN…QELCGRCKGQ (85 aa)).

Belongs to the ZAR1 family. In terms of assembly, component of a cytoplasmic ribonucleoprotein complex together with eif4enif1/4E-T and cpeb1. In terms of tissue distribution, expressed in oocytes.

Its subcellular location is the cytoplasm. The protein localises to the cytoplasmic ribonucleoprotein granule. In terms of biological role, mRNA-binding protein required for maternal mRNA storage, translation and degradation during oocyte maturation. Controls timing of meiosis during oogenesis. Probably promotes formation of some phase-separated membraneless compartment that stores maternal mRNAs in oocytes: acts by undergoing liquid-liquid phase separation upon binding to maternal mRNAs. Binds to the 3'-UTR of maternal mRNAs, inhibiting their translation. In Xenopus laevis (African clawed frog), this protein is Protein ZAR1-like 1.L.